The sequence spans 91 residues: Small ribosomal subunit protein bS16 (91 aa).

Belongs to the bacterial ribosomal protein bS16 family.

The sequence is that of Small ribosomal subunit protein bS16 from Limosilactobacillus reuteri (strain DSM 20016) (Lactobacillus reuteri).